The primary structure comprises 54 residues: Conotoxin mr5.4b (54 aa).

The signal sequence occupies residues 1 to 14 (ILLLLIASAPSVDA). Positions 15 to 40 (QLKTKDDVPLASFHANVKRTLQKLLN) are excised as a propeptide. 4-carboxyglutamate is present on Glu-52.

The protein belongs to the conotoxin T superfamily. Contains 2 disulfide bonds that can be either 'C1-C3, C2-C4' or 'C1-C4, C2-C3', since these disulfide connectivities have been observed for conotoxins with cysteine framework V (for examples, see AC P0DQQ7 and AC P81755). As to expression, expressed by the venom duct.

It is found in the secreted. The polypeptide is Conotoxin mr5.4b (Conus marmoreus (Marble cone)).